We begin with the raw amino-acid sequence, 189 residues long: GTP cyclohydrolase 1 (189 aa).

Residues cysteine 78, histidine 81, and cysteine 150 each contribute to the Zn(2+) site.

Belongs to the GTP cyclohydrolase I family. In terms of assembly, toroid-shaped homodecamer, composed of two pentamers of five dimers.

The enzyme catalyses GTP + H2O = 7,8-dihydroneopterin 3'-triphosphate + formate + H(+). It functions in the pathway cofactor biosynthesis; 7,8-dihydroneopterin triphosphate biosynthesis; 7,8-dihydroneopterin triphosphate from GTP: step 1/1. This Listeria welshimeri serovar 6b (strain ATCC 35897 / DSM 20650 / CCUG 15529 / CIP 8149 / NCTC 11857 / SLCC 5334 / V8) protein is GTP cyclohydrolase 1.